An 85-amino-acid chain; its full sequence is Large ribosomal subunit protein bL27 (85 aa).

The segment at 1–26 (MAHKKGVGSSRNGRDSNPKMLGVKRF) is disordered.

It belongs to the bacterial ribosomal protein bL27 family.

The protein is Large ribosomal subunit protein bL27 of Roseiflexus sp. (strain RS-1).